A 326-amino-acid chain; its full sequence is Adenosine receptor A1 (326 aa).

The Extracellular portion of the chain corresponds to methionine 1–alanine 10. The chain crosses the membrane as a helical span at residues alanine 11–alanine 33. Residues valine 34–cysteine 46 lie on the Cytoplasmic side of the membrane. A helical transmembrane segment spans residues phenylalanine 47–isoleucine 69. Residues asparagine 70–cysteine 80 are Extracellular-facing. An intrachain disulfide couples cysteine 80 to cysteine 169. The helical transmembrane segment at leucine 81–alanine 102 threads the bilayer. The Cytoplasmic portion of the chain corresponds to valine 103–arginine 123. Residues alanine 124–tryptophan 146 traverse the membrane as a helical segment. Topologically, residues asparagine 147 to serine 176 are extracellular. Residues asparagine 148 and asparagine 159 are each glycosylated (N-linked (GlcNAc...) asparagine). A helical transmembrane segment spans residues methionine 177–leucine 201. Residues glutamate 202–serine 235 are Cytoplasmic-facing. The helical transmembrane segment at leucine 236–phenylalanine 259 threads the bilayer. At cysteine 260–serine 267 the chain is on the extracellular side. A helical membrane pass occupies residues isoleucine 268–isoleucine 292. At histidine 293–aspartate 326 the chain is on the cytoplasmic side. Cysteine 309 carries the S-palmitoyl cysteine lipid modification.

Belongs to the G-protein coupled receptor 1 family.

The protein resides in the cell membrane. Receptor for adenosine. The activity of this receptor is mediated by G proteins which inhibit adenylyl cyclase. This chain is Adenosine receptor A1 (Adora1), found in Mus musculus (Mouse).